Here is a 1849-residue protein sequence, read N- to C-terminus: Protein virilizer (1849 aa).

Composition is skewed to basic and acidic residues over residues 206-219, 242-265, 281-291, 332-347, and 785-818; these read QHYH…QREM, THSE…DWSR, RSRSDADEHKW, HSSE…EERS, and VEAK…AAEE. 6 disordered regions span residues 206–364, 783–818, 1557–1584, 1666–1686, 1715–1782, and 1798–1849; these read QHYH…DEII, RVVE…AAEE, SASM…SSSG, GESK…EMTP, RGRG…NRGS, and IGSP…PYLR. Polar residues predominate over residues 1671–1684; sequence TLNLSGSPQSNREM. Positions 1732–1742 are enriched in low complexity; that stretch reads SRPPNTSRPPS. Residues 1800–1818 are compositionally biased toward polar residues; it reads SPSSWTESGGGSYRSTSES.

The protein belongs to the vir family. Component of the WMM complex, a N6-methyltransferase complex composed of a catalytic subcomplex, named MAC, and of an associated subcomplex, named MACOM. The MAC subcomplex is composed of Ime4/Mettl3 and Mettl14. The MACOM subcomplex is composed of fl(2)d, Flacc/Xio, Hakai, vir, and, in some cases of nito. Part of a complex containing fl(2)d, Sxl and vir.

It localises to the nucleus. In terms of biological role, associated component of the WMM complex, a complex that mediates N6-methyladenosine (m6A) methylation of mRNAs, a modification that plays a role in the efficiency of mRNA splicing and is required for sex determination. Required for sex determination and dosage compensation via Sxl alternative splicing: m6A methylation acts as a key regulator of Sxl pre-mRNA and promotes female-specific alternative splicing of Sxl, which determines female physiognomy. M6A methylation is also required for neuronal functions. Required for proper inclusion of regulated exons in Ubx transcripts, leading to isoforms Ia/b and IIa/b. The protein is Protein virilizer (vir) of Drosophila pseudoobscura pseudoobscura (Fruit fly).